We begin with the raw amino-acid sequence, 370 residues long: Queuine tRNA-ribosyltransferase (370 aa).

Aspartate 93 serves as the catalytic Proton acceptor. Residues 93 to 97, aspartate 147, glutamine 189, and glycine 216 each bind substrate; that span reads DSGGF. The segment at 247 to 253 is RNA binding; that stretch reads GVGSPDC. Aspartate 266 functions as the Nucleophile in the catalytic mechanism. Positions 271-275 are RNA binding; important for wobble base 34 recognition; that stretch reads TRIAR. Zn(2+) is bound by residues cysteine 304, cysteine 306, cysteine 309, and histidine 335.

This sequence belongs to the queuine tRNA-ribosyltransferase family. Homodimer. Within each dimer, one monomer is responsible for RNA recognition and catalysis, while the other monomer binds to the replacement base PreQ1. Zn(2+) serves as cofactor.

The enzyme catalyses 7-aminomethyl-7-carbaguanine + guanosine(34) in tRNA = 7-aminomethyl-7-carbaguanosine(34) in tRNA + guanine. It functions in the pathway tRNA modification; tRNA-queuosine biosynthesis. Functionally, catalyzes the base-exchange of a guanine (G) residue with the queuine precursor 7-aminomethyl-7-deazaguanine (PreQ1) at position 34 (anticodon wobble position) in tRNAs with GU(N) anticodons (tRNA-Asp, -Asn, -His and -Tyr). Catalysis occurs through a double-displacement mechanism. The nucleophile active site attacks the C1' of nucleotide 34 to detach the guanine base from the RNA, forming a covalent enzyme-RNA intermediate. The proton acceptor active site deprotonates the incoming PreQ1, allowing a nucleophilic attack on the C1' of the ribose to form the product. After dissociation, two additional enzymatic reactions on the tRNA convert PreQ1 to queuine (Q), resulting in the hypermodified nucleoside queuosine (7-(((4,5-cis-dihydroxy-2-cyclopenten-1-yl)amino)methyl)-7-deazaguanosine). This is Queuine tRNA-ribosyltransferase from Desulforamulus reducens (strain ATCC BAA-1160 / DSM 100696 / MI-1) (Desulfotomaculum reducens).